The sequence spans 91 residues: Small integral membrane protein 12 (91 aa).

A helical membrane pass occupies residues 12 to 34 (YAPYVTFPVAFVVGAVGYHLEWF).

It belongs to the SMIM12 family.

The protein localises to the membrane. The protein is Small integral membrane protein 12 (smim12) of Danio rerio (Zebrafish).